Reading from the N-terminus, the 395-residue chain is Flap endonuclease 1 (395 aa).

The segment at 1–104 (MGIKHLYQVI…GELAKRFMRK (104 aa)) is N-domain. A Mg(2+)-binding site is contributed by D34. Residues R47 and R70 each contribute to the DNA site. Positions 86, 158, 160, 179, and 181 each coordinate Mg(2+). The I-domain stretch occupies residues 122–253 (DVEKFSRRTV…NTALKLIRDH (132 aa)). E158 serves as a coordination point for DNA. The DNA site is built by G231 and D233. Residue D233 coordinates Mg(2+). Positions 341–349 (QQSRLEGFF) are interaction with PCNA. The span at 357–389 (QEKATLKRKHEEKLELQKKKKKEEAKAKKEAKS) shows a compositional bias: basic and acidic residues. The segment at 357–395 (QEKATLKRKHEEKLELQKKKKKEEAKAKKEAKSKPRGAV) is disordered.

It belongs to the XPG/RAD2 endonuclease family. FEN1 subfamily. Interacts with PCNA. Three molecules of FEN1 bind to one PCNA trimer with each molecule binding to one PCNA monomer. PCNA stimulates the nuclease activity without altering cleavage specificity. Requires Mg(2+) as cofactor. Phosphorylated. Phosphorylation upon DNA damage induces relocalization to the nuclear plasma.

The protein resides in the nucleus. Its subcellular location is the nucleolus. It localises to the nucleoplasm. It is found in the mitochondrion. Functionally, structure-specific nuclease with 5'-flap endonuclease and 5'-3' exonuclease activities involved in DNA replication and repair. During DNA replication, cleaves the 5'-overhanging flap structure that is generated by displacement synthesis when DNA polymerase encounters the 5'-end of a downstream Okazaki fragment. It enters the flap from the 5'-end and then tracks to cleave the flap base, leaving a nick for ligation. Also involved in the long patch base excision repair (LP-BER) pathway, by cleaving within the apurinic/apyrimidinic (AP) site-terminated flap. Acts as a genome stabilization factor that prevents flaps from equilibrating into structures that lead to duplications and deletions. Also possesses 5'-3' exonuclease activity on nicked or gapped double-stranded DNA, and exhibits RNase H activity. Also involved in replication and repair of rDNA and in repairing mitochondrial DNA. The polypeptide is Flap endonuclease 1 (Ajellomyces dermatitidis (strain ER-3 / ATCC MYA-2586) (Blastomyces dermatitidis)).